The primary structure comprises 766 residues: MASEPVNGGEGIDGAREKQIIKVYKRKGKGQRKQSSFFALEAAIEKPEGLLENENDNNDVSPAETLAPEFEDPIVVVKNSIEEAALGTNSHGDKNLTEAPSENLPGDDSDKVIDKPLVEAFSQAQPQDDASLAAMDKSEEVPSQIPKAQDDVNTVVVDENSIKEPPKSLAQEDVTTVIVDKNPIEAPSQTLSLEDGDTLVVDKNPIEVSSEEDVHVIDADNLIKEAHPENFVERDTTDAQQPAGLTSDSAHATAAGSMPMEEDADGRIRIHVASTTKQQKEEIRKKLEDQLNVVRGMVKKIEDKEGEIGAYNDSRVLINTGINNGGGRILSGFASAGLPREVIRAPRPVNQLSISVLENTQGVNEHVEKEKRTPKANQFYRNSEFLLGDKLPPAESNKKSKSSSKKQGGDVGHGFGAGTKVFKNCSALLERLMKHKHGWVFNAPVDVKGLGLLDYYTIIEHPMDLGTIKSALMKNLYKSPREFAEDVRLTFHNAMTYNPEGQDVHLMAVTLLQIFEERWAVIEADYNREMRFVTGYEMNLPTPTMRSRLGPTMPPPPINVRNTIDRADWSNRQPTTTPGRTPTSATPSGRTPALKKPKANEPNKRDMTYEEKQKLSGHLQNLPPDKLDAIVQIVNKRNTAVKLRDEEIEVDIDSVDPETLWELDRFVTNYKKGLSKKKRKAELAIQARAEAERNSQQQMAPAPAAHEFSREGGNTAKKTLPTPLPSQVEKQNNETSRSSSSSSSSSSSSSSDSDSDSSSSSGSDQT.

3 disordered regions span residues 87-108 (GTNS…PGDD), 234-262 (RDTT…PMEE), and 388-412 (GDKL…GDVG). Residues 238-250 (DAQQPAGLTSDSA) show a composition bias toward polar residues. Residues 416 to 522 (GAGTKVFKNC…QIFEERWAVI (107 aa)) form the Bromo domain. Disordered stretches follow at residues 544 to 606 (TMRS…NKRD) and 687 to 766 (ARAE…SDQT). A compositionally biased stretch (low complexity) spans 574 to 589 (PTTTPGRTPTSATPSG). In terms of domain architecture, NET spans 597-678 (PKANEPNKRD…NYKKGLSKKK (82 aa)). The segment covering 736 to 766 (SRSSSSSSSSSSSSSSDSDSDSSSSSGSDQT) has biased composition (low complexity).

As to expression, ubiquitously expressed.

The protein resides in the nucleus. In terms of biological role, involved in the activation and maintenance of cell division in the meristems and by this controls cell numbers in differentiated organs. Its action in cell cycle regulation may be directed through the RB-E2F pathway. This Arabidopsis thaliana (Mouse-ear cress) protein is Transcription factor GTE4 (GTE4).